The following is a 525-amino-acid chain: GMP synthase [glutamine-hydrolyzing] (525 aa).

Residues 8-207 form the Glutamine amidotransferase type-1 domain; the sequence is KILILDFGSQ…ALDICGCDAN (200 aa). Residue Cys-85 is the Nucleophile of the active site. Residues His-181 and Glu-183 contribute to the active site. The region spanning 208–400 is the GMPS ATP-PPase domain; the sequence is WKPSSIIEDA…LGLPYDMLYR (193 aa). ATP is bound at residue 235-241; it reads SGGVDSS.

As to quaternary structure, homodimer.

It carries out the reaction XMP + L-glutamine + ATP + H2O = GMP + L-glutamate + AMP + diphosphate + 2 H(+). The protein operates within purine metabolism; GMP biosynthesis; GMP from XMP (L-Gln route): step 1/1. In terms of biological role, catalyzes the synthesis of GMP from XMP. This is GMP synthase [glutamine-hydrolyzing] from Shewanella piezotolerans (strain WP3 / JCM 13877).